A 486-amino-acid chain; its full sequence is V-type proton ATPase subunit B1 (486 aa).

G2 is modified (N-acetylglycine).

Belongs to the ATPase alpha/beta chains family. As to quaternary structure, V-ATPase is a heteromultimeric enzyme composed of a peripheral catalytic V1 complex (components A to H) attached to an integral membrane V0 proton pore complex (components: a, c, c'', d and e).

The protein localises to the vacuole membrane. Functionally, non-catalytic subunit of the peripheral V1 complex of vacuolar ATPase. V-ATPase is responsible for acidifying a variety of intracellular compartments in eukaryotic cells. This chain is V-type proton ATPase subunit B1 (VHA-B1), found in Arabidopsis thaliana (Mouse-ear cress).